The primary structure comprises 503 residues: Transmembrane prolyl 4-hydroxylase (503 aa).

The tract at residues 1–49 (MAAAVATVQRPEAETVEEASNLQWPLPPEHRPSGAATRPGDSEDAPVRP) is disordered. Over 1-61 (MAAAVATVQR…KPRGICSRAY (61 aa)) the chain is Cytoplasmic. A helical; Signal-anchor for type II membrane protein membrane pass occupies residues 62-82 (FLVLMVFVHLYLGNVLALLLF). The Lumenal segment spans residues 83 to 503 (VHYSNGDEST…RAYSDARVEL (421 aa)). Positions 90 to 110 (ESTDPGPQRREQSPQPVPTLG) are disordered. EF-hand domains lie at 186-221 (AMQV…GNGR) and 225-260 (PENI…DFHK). Ca(2+)-binding residues include Asp-199, Asn-201, Asp-203, Arg-205, Glu-210, Asp-238, Asp-240, Asp-242, and Glu-249. Residues 310 to 461 (EFSEPLQVVR…KWIANNWINV (152 aa)) form the Fe2OG dioxygenase domain. His-329 and Asp-331 together coordinate Fe cation. Asn-349 and Asn-369 each carry an N-linked (GlcNAc...) asparagine glycan. Residue Glu-375 coordinates Fe cation. Asn-383 carries an N-linked (GlcNAc...) asparagine glycan. Lys-452 serves as a coordination point for 2-oxoglutarate.

As to quaternary structure, homodimer. Requires Fe(2+) as cofactor. L-ascorbate serves as cofactor. Glycosylated. Highest expression levels are detected in the eye and brain, especially in the retinal epithelium cells and cortical neurons. Also expressed in skeletal muscle, lung, heart, adrenal gland, kidney, prostate, thyroid and testis.

The protein localises to the endoplasmic reticulum membrane. The enzyme catalyses L-prolyl-[hypoxia-inducible factor alpha subunit] + 2-oxoglutarate + O2 = trans-4-hydroxy-L-prolyl-[hypoxia-inducible factor alpha subunit] + succinate + CO2. Catalyzes the post-translational formation of 4-hydroxyproline in hypoxia-inducible factor (HIF) alpha proteins. Hydroxylates HIF1A at 'Pro-402' and 'Pro-564'. May function as a cellular oxygen sensor and, under normoxic conditions, may target HIF through the hydroxylation for proteasomal degradation via the von Hippel-Lindau ubiquitination complex. This Mus musculus (Mouse) protein is Transmembrane prolyl 4-hydroxylase (P4htm).